The following is a 485-amino-acid chain: Glutamyl-tRNA(Gln) amidotransferase subunit A (485 aa).

Residues Lys78 and Ser153 each act as charge relay system in the active site. The active-site Acyl-ester intermediate is Ser177.

Belongs to the amidase family. GatA subfamily. Heterotrimer of A, B and C subunits.

It carries out the reaction L-glutamyl-tRNA(Gln) + L-glutamine + ATP + H2O = L-glutaminyl-tRNA(Gln) + L-glutamate + ADP + phosphate + H(+). Its function is as follows. Allows the formation of correctly charged Gln-tRNA(Gln) through the transamidation of misacylated Glu-tRNA(Gln) in organisms which lack glutaminyl-tRNA synthetase. The reaction takes place in the presence of glutamine and ATP through an activated gamma-phospho-Glu-tRNA(Gln). The polypeptide is Glutamyl-tRNA(Gln) amidotransferase subunit A (Geobacter metallireducens (strain ATCC 53774 / DSM 7210 / GS-15)).